Consider the following 310-residue polypeptide: N-acetyl-gamma-glutamyl-phosphate reductase (310 aa).

The active site involves cysteine 117.

It belongs to the NAGSA dehydrogenase family. Type 2 subfamily.

The protein resides in the cytoplasm. It carries out the reaction N-acetyl-L-glutamate 5-semialdehyde + phosphate + NADP(+) = N-acetyl-L-glutamyl 5-phosphate + NADPH + H(+). Its pathway is amino-acid biosynthesis; L-arginine biosynthesis; N(2)-acetyl-L-ornithine from L-glutamate: step 3/4. Its function is as follows. Catalyzes the NADPH-dependent reduction of N-acetyl-5-glutamyl phosphate to yield N-acetyl-L-glutamate 5-semialdehyde. This Rhizobium rhizogenes (strain K84 / ATCC BAA-868) (Agrobacterium radiobacter) protein is N-acetyl-gamma-glutamyl-phosphate reductase.